We begin with the raw amino-acid sequence, 218 residues long: Ribose-5-phosphate isomerase A (218 aa).

Residues 28–31 (TGST), 81–84 (DGAD), and 94–97 (KGGG) contribute to the substrate site. Residue E103 is the Proton acceptor of the active site. K121 serves as a coordination point for substrate.

Belongs to the ribose 5-phosphate isomerase family. Homodimer.

The enzyme catalyses aldehydo-D-ribose 5-phosphate = D-ribulose 5-phosphate. Its pathway is carbohydrate degradation; pentose phosphate pathway; D-ribose 5-phosphate from D-ribulose 5-phosphate (non-oxidative stage): step 1/1. Catalyzes the reversible conversion of ribose-5-phosphate to ribulose 5-phosphate. This Vibrio campbellii (strain ATCC BAA-1116) protein is Ribose-5-phosphate isomerase A.